The primary structure comprises 156 residues: Small ribosomal subunit protein uS7 (156 aa).

Belongs to the universal ribosomal protein uS7 family. Part of the 30S ribosomal subunit. Contacts proteins S9 and S11.

In terms of biological role, one of the primary rRNA binding proteins, it binds directly to 16S rRNA where it nucleates assembly of the head domain of the 30S subunit. Is located at the subunit interface close to the decoding center, probably blocks exit of the E-site tRNA. The protein is Small ribosomal subunit protein uS7 of Streptococcus pyogenes serotype M12 (strain MGAS2096).